Reading from the N-terminus, the 157-residue chain is NADPH-dependent 7-cyano-7-deazaguanine reductase (157 aa).

C56 (thioimide intermediate) is an active-site residue. D63 serves as the catalytic Proton donor. Substrate contacts are provided by residues 78–80 (VES) and 97–98 (HE).

The protein belongs to the GTP cyclohydrolase I family. QueF type 1 subfamily.

It localises to the cytoplasm. It carries out the reaction 7-aminomethyl-7-carbaguanine + 2 NADP(+) = 7-cyano-7-deazaguanine + 2 NADPH + 3 H(+). It functions in the pathway tRNA modification; tRNA-queuosine biosynthesis. Catalyzes the NADPH-dependent reduction of 7-cyano-7-deazaguanine (preQ0) to 7-aminomethyl-7-deazaguanine (preQ1). The polypeptide is NADPH-dependent 7-cyano-7-deazaguanine reductase (Parabacteroides distasonis (strain ATCC 8503 / DSM 20701 / CIP 104284 / JCM 5825 / NCTC 11152)).